The following is a 295-amino-acid chain: Aquaporin NIP2-1 (295 aa).

Helical transmembrane passes span 49-69 (VVSE…AAGI) and 83-103 (SVAG…ISGA). An NPA 1 motif is present at residues 106–108 (NPA). The next 3 helical transmembrane spans lie at 124–146 (VPFY…KAVL), 164–184 (SLVI…AVAT), and 192–212 (LAGL…GAVS). Residues 217–219 (NPA) carry the NPA 2 motif. The helical transmembrane segment at 230–250 (LYTGLWIYFLGPVLGTLSGAW) threads the bilayer.

It belongs to the MIP/aquaporin (TC 1.A.8) family. NIP (TC 1.A.8.12) subfamily.

It is found in the membrane. Functionally, aquaporins facilitate the transport of water and small neutral solutes across cell membranes. This chain is Aquaporin NIP2-1 (NIP2-1), found in Zea mays (Maize).